The sequence spans 341 residues: Ribosomal RNA small subunit methyltransferase C (341 aa).

It belongs to the methyltransferase superfamily. RsmC family. As to quaternary structure, monomer.

Its subcellular location is the cytoplasm. The catalysed reaction is guanosine(1207) in 16S rRNA + S-adenosyl-L-methionine = N(2)-methylguanosine(1207) in 16S rRNA + S-adenosyl-L-homocysteine + H(+). Specifically methylates the guanine in position 1207 of 16S rRNA in the 30S particle. The protein is Ribosomal RNA small subunit methyltransferase C of Vibrio parahaemolyticus serotype O3:K6 (strain RIMD 2210633).